A 239-amino-acid polypeptide reads, in one-letter code: Mitochondrial fission factor homolog B (239 aa).

At 1–219 (MAEINRMQYE…ENKERVKHEM (219 aa)) the chain is on the cytoplasmic side. The tract at residues 107 to 139 (EGPAPATPHSKEVRSSGHLKRDGLASENSLRQN) is disordered. Positions 115 to 130 (HSKEVRSSGHLKRDGL) are enriched in basic and acidic residues. Positions 184–214 (DLALADAASLRRQIIKLNRRLLLLEEENKER) form a coiled coil. The helical; Anchor for type IV membrane protein transmembrane segment at 220 to 237 (TMYSIIIIFGLLNSWLWF) threads the bilayer. Residues 238–239 (RR) lie on the Extracellular side of the membrane.

The protein belongs to the Tango11 family.

It is found in the mitochondrion outer membrane. The protein localises to the peroxisome. Its function is as follows. Plays a role in mitochondrial and peroxisomal fission. Promotes the recruitment and association of the fission mediator dynamin-related protein 1 (DNM1L) to the mitochondrial surface. This is Mitochondrial fission factor homolog B (mff-b) from Xenopus laevis (African clawed frog).